The primary structure comprises 199 residues: Thymidine kinase (199 aa).

ATP-binding positions include 9–16 and 93–96; these read GAMSSGKS and DEAQ. E94 functions as the Proton acceptor in the catalytic mechanism. C151, C154, C188, and H191 together coordinate Zn(2+).

The protein belongs to the thymidine kinase family. In terms of assembly, homotetramer.

The protein localises to the cytoplasm. It catalyses the reaction thymidine + ATP = dTMP + ADP + H(+). This Lactobacillus johnsonii (strain CNCM I-12250 / La1 / NCC 533) protein is Thymidine kinase.